Consider the following 72-residue polypeptide: Cell division protein ZapB (72 aa).

Positions 3–71 (LSIIDQLEEK…LRSLLGQIDN (69 aa)) form a coiled coil.

Belongs to the ZapB family. In terms of assembly, homodimer. The ends of the coiled-coil dimer bind to each other, forming polymers. Interacts with FtsZ.

The protein localises to the cytoplasm. Functionally, non-essential, abundant cell division factor that is required for proper Z-ring formation. It is recruited early to the divisome by direct interaction with FtsZ, stimulating Z-ring assembly and thereby promoting cell division earlier in the cell cycle. Its recruitment to the Z-ring requires functional FtsA or ZipA. The protein is Cell division protein ZapB of Haemophilus ducreyi (strain 35000HP / ATCC 700724).